Here is a 2912-residue protein sequence, read N- to C-terminus: Fibrillin-2 (2912 aa).

An N-terminal signal peptide occupies residues 1-28 (MGRRRRLCLQLYFLWLGCVVLWAQGTAG). Residues 27–52 (AGQPQPPPPKPPRPQPPPQQVRSATA) form a disordered region. Positions 29–77 (QPQPPPPKPPRPQPPPQQVRSATAGSEGGFLAPEYREEGAAVASRVRRR) are excised as a propeptide. Positions 30-45 (PQPPPPKPPRPQPPPQ) are enriched in pro residues. 3 EGF-like domains span residues 111-142 (IVPICRNSCGDGFCSRPNMCTCSSGQISSTCG), 145-176 (SIQQCSVRCMNGGTCADDHCQCQKGYIGTYCG), and 176-208 (GQPVCENGCQNGGRCIGPNRCACVYGFTGPQCE). Cystine bridges form between cysteine 115-cysteine 124, cysteine 119-cysteine 130, cysteine 132-cysteine 141, cysteine 149-cysteine 159, cysteine 153-cysteine 164, cysteine 166-cysteine 175, cysteine 180-cysteine 190, cysteine 184-cysteine 196, and cysteine 198-cysteine 207. Positions 149-359 (CSVRCMNGGT…VTSTDGSRCI (211 aa)) are interaction with MFAP4. The TB 1 domain maps to 214–266 (GPCFTQVNNQMCQGQLTGIVCTKTLCCATIGRAWGHPCEMCPAQPQPCRRGFI). The EGF-like 4; calcium-binding domain maps to 276 to 317 (DVDECQAIPGICQGGNCINTVGSFECRCPAGHKQSETTQKCE). Intrachain disulfides connect cysteine 280–cysteine 292, cysteine 287–cysteine 301, cysteine 303–cysteine 316, cysteine 322–cysteine 334, cysteine 329–cysteine 343, and cysteine 345–cysteine 358. A glycan (O-linked (Glc) serine) is linked at serine 298. Residues 318–359 (DIDECSIIPGICETGECSNTVGSYFCVCPRGYVTSTDGSRCI) enclose the EGF-like 5; calcium-binding domain. O-linked (Glc) serine glycosylation occurs at serine 340. The 54-residue stretch at 364-417 (GMCFSGLVNGRCAQELPGRMTKMQCCCEPGRCWGIGTIPEACPVRGSEEYRRLC) folds into the TB 2 domain. A glycan (N-linked (GlcNAc...) asparagine) is linked at asparagine 492. An EGF-like 6 domain is found at 494 to 534 (TIDICKHHANLCLNGRCIPTVSSYRCECNMGYKQDANGDCI). 15 disulfides stabilise this stretch: cysteine 498–cysteine 510, cysteine 505–cysteine 519, cysteine 521–cysteine 533, cysteine 539–cysteine 549, cysteine 544–cysteine 558, cysteine 560–cysteine 573, cysteine 579–cysteine 591, cysteine 586–cysteine 600, cysteine 602–cysteine 615, cysteine 621–cysteine 632, cysteine 627–cysteine 641, cysteine 643–cysteine 656, cysteine 662–cysteine 673, cysteine 668–cysteine 682, and cysteine 684–cysteine 697. O-linked (Glc) serine glycosylation occurs at serine 516. An EGF-like 7; calcium-binding domain is found at 535–574 (DVDECTSNPCTNGDCVNTPGSYYCKCHAGFQRTPTKQACI). A glycan (O-linked (Glc) serine) is linked at serine 555. The EGF-like 8; calcium-binding domain maps to 575 to 616 (DIDECIQNGVLCKNGRCVNTDGSFQCICNAGFELTTDGKNCV). A glycan (O-linked (Glc) serine) is linked at serine 597. Positions 617 to 657 (DHDECTTTNMCLNGMCINEDGSFKCICKPGFVLAPNGRYCT) constitute an EGF-like 9; calcium-binding domain. O-linked (Glc) serine glycosylation is present at serine 638. An EGF-like 10; calcium-binding domain is found at 658-698 (DVDECQTPGICMNGHCINSEGSFRCDCPPGLAVGMDGRVCV). Serine 679 carries an O-linked (Glc) serine glycan. One can recognise a TB 3 domain in the interval 704 to 756 (STCYGGIKKGVCVRPFPGAVTKSECCCANPDYGFGEPCQPCPAKNSAEFHGLC). The EGF-like 11; calcium-binding domain occupies 768 to 809 (DINECALDPDICANGICENLRGSYRCNCNSGYEPDASGRNCI). 9 disulfides stabilise this stretch: cysteine 772–cysteine 784, cysteine 779–cysteine 793, cysteine 795–cysteine 808, cysteine 814–cysteine 826, cysteine 821–cysteine 835, cysteine 837–cysteine 850, cysteine 856–cysteine 866, cysteine 861–cysteine 875, and cysteine 877–cysteine 890. The region spanning 810 to 851 (DIDECLVNRLLCDNGLCRNTPGSYSCTCPPGYVFRTETETCE) is the EGF-like 12; calcium-binding domain. The O-linked (Glc) serine glycan is linked to serine 832. The region spanning 852-891 (DINECESNPCVNGACRNNLGSFNCECSPGSKLSSTGLICI) is the EGF-like 13; calcium-binding domain. Serine 872 carries O-linked (Glc) serine glycosylation. The 52-residue stretch at 896 to 947 (GTCWLNIQDSRCEVNINGATLKSECCATLGAAWGSPCERCELDTACPRGLAR) folds into the TB 4 domain. One can recognise an EGF-like 14; calcium-binding domain in the interval 955 to 996 (DVNECEVFPGVCPNGRCVNSKGSFHCECPEGLTLDGTGRVCL). 3 disulfides stabilise this stretch: cysteine 959/cysteine 971, cysteine 966/cysteine 980, and cysteine 982/cysteine 995. The O-linked (Glc) serine glycan is linked to serine 977. One can recognise a TB 5 domain in the interval 1001 to 1052 (EQCYLKWDEDECIHPVPGKFRMDACCCAVGAAWGTECEECPKPGTKEYETLC). Positions 1073 to 1114 (DINECKAFPGMCTYGKCRNTIGSFKCRCNSGFALDMEERNCT) constitute an EGF-like 15; calcium-binding domain. Disulfide bonds link cysteine 1077–cysteine 1089, cysteine 1084–cysteine 1098, cysteine 1100–cysteine 1113, cysteine 1119–cysteine 1131, cysteine 1126–cysteine 1140, cysteine 1142–cysteine 1156, cysteine 1162–cysteine 1174, cysteine 1169–cysteine 1183, cysteine 1185–cysteine 1198, cysteine 1204–cysteine 1216, cysteine 1211–cysteine 1225, cysteine 1227–cysteine 1240, cysteine 1246–cysteine 1257, cysteine 1253–cysteine 1266, cysteine 1268–cysteine 1281, cysteine 1287–cysteine 1299, cysteine 1294–cysteine 1308, cysteine 1310–cysteine 1323, cysteine 1329–cysteine 1341, cysteine 1336–cysteine 1350, cysteine 1352–cysteine 1365, cysteine 1371–cysteine 1384, cysteine 1378–cysteine 1393, cysteine 1395–cysteine 1406, cysteine 1412–cysteine 1425, cysteine 1419–cysteine 1434, cysteine 1436–cysteine 1447, cysteine 1453–cysteine 1465, cysteine 1460–cysteine 1474, cysteine 1476–cysteine 1489, cysteine 1495–cysteine 1506, cysteine 1501–cysteine 1515, cysteine 1517–cysteine 1530, cysteine 1536–cysteine 1547, cysteine 1542–cysteine 1556, and cysteine 1558–cysteine 1571. Serine 1095 carries O-linked (Glc) serine glycosylation. A glycan (N-linked (GlcNAc...) asparagine) is linked at asparagine 1112. The EGF-like 16; calcium-binding domain maps to 1115–1157 (DIDECRISPDLCGSGICVNTPGSFECECFEGYESGFMMMKNCM). Residues 1158–1199 (DIDECERNPLLCRGGTCVNTEGSFQCDCPLGHELSPSREDCV) enclose the EGF-like 17; calcium-binding domain. The O-linked (Glc) serine glycan is linked to serine 1180. The region spanning 1200-1241 (DINECSLSDNLCRNGKCVNMIGTYQCSCNPGYQATPDRQGCT) is the EGF-like 18; calcium-binding domain. Threonine 1222 carries O-linked (Glc) threonine glycosylation. An EGF-like 19; calcium-binding domain is found at 1242 to 1282 (DIDECMIMNGGCDTQCTNSEGSYECSCSEGYALMPDGRSCA). O-linked (Glc) serine glycosylation occurs at serine 1263. Positions 1283-1324 (DIDECENNPDICDGGQCTNIPGEYRCLCYDGFMASMDMKTCI) constitute an EGF-like 20; calcium-binding domain. The region spanning 1325 to 1366 (DVNECDLNSNICMFGECENTKGSFICHCQLGYSVKKGTTGCT) is the EGF-like 21; calcium-binding domain. Serine 1347 carries an O-linked (Glc) serine glycan. One can recognise an EGF-like 22; calcium-binding domain in the interval 1367–1407 (DVDECEIGAHNCDMHASCLNIPGSFKCSCREGWIGNGIKCI). The O-linked (Glc) serine glycan is linked to serine 1390. An EGF-like 23; calcium-binding domain is found at 1408-1448 (DLDECSNGTHQCSINAQCVNTPGSYRCACSEGFTGDGFTCS). A glycan (N-linked (GlcNAc...) asparagine) is linked at asparagine 1414. Residues 1449–1490 (DVDECAENINLCENGQCLNVPGAYRCECEMGFTPASDSRSCQ) enclose the EGF-like 24; calcium-binding domain. Positions 1491–1531 (DIDECSFQNICVFGTCNNLPGMFHCICDDGYELDRTGGNCT) constitute an EGF-like 25; calcium-binding domain. N-linked (GlcNAc...) asparagine glycosylation occurs at asparagine 1529. Positions 1532 to 1572 (DIDECADPINCVNGLCVNTPGRYECNCPPDFQLNPTGVGCV) constitute an EGF-like 26; calcium-binding domain. The TB 6 domain maps to 1577 to 1633 (GNCYLKFGPRGDGSLSCNTEIGVGVSRSSCCCSLGKAWGNPCETCPPVNSTEYYTLC). Asparagine 1625 carries an N-linked (GlcNAc...) asparagine glycan. Positions 1650–1691 (DIDECQELPGLCQGGNCINTFGSFQCECPQGYYLSEDTRICE) constitute an EGF-like 27; calcium-binding domain. 6 cysteine pairs are disulfide-bonded: cysteine 1654/cysteine 1666, cysteine 1661/cysteine 1675, cysteine 1677/cysteine 1690, cysteine 1696/cysteine 1708, cysteine 1703/cysteine 1717, and cysteine 1719/cysteine 1732. Serine 1672 is a glycosylation site (O-linked (Glc) serine). The region spanning 1692–1733 (DIDECFAHPGVCGPGTCYNTLGNYTCICPPEYMQVNGGHNCM) is the EGF-like 28; calcium-binding domain. Residue asparagine 1714 is glycosylated (N-linked (GlcNAc...) asparagine). An interaction with MFAP4 region spans residues 1735–2171 (MRKSFCYRSY…VPSLHDTRED (437 aa)). The TB 7 domain occupies 1738-1791 (SFCYRSYNGTTCENELPFNVTKRMCCCTYNVGKAWNKPCEPCPTPGTADFKTIC). Residues asparagine 1745 and asparagine 1756 are each glycosylated (N-linked (GlcNAc...) asparagine). The region spanning 1808–1849 (DIDECKEIPGICANGVCINQIGSFRCECPTGFSYNDLLLVCE) is the EGF-like 29; calcium-binding domain. 21 cysteine pairs are disulfide-bonded: cysteine 1812–cysteine 1824, cysteine 1819–cysteine 1833, cysteine 1835–cysteine 1848, cysteine 1854–cysteine 1867, cysteine 1861–cysteine 1876, cysteine 1878–cysteine 1890, cysteine 1896–cysteine 1908, cysteine 1903–cysteine 1917, cysteine 1919–cysteine 1932, cysteine 1938–cysteine 1948, cysteine 1943–cysteine 1957, cysteine 1959–cysteine 1971, cysteine 1977–cysteine 1990, cysteine 1985–cysteine 1999, cysteine 2001–cysteine 2014, cysteine 2020–cysteine 2032, cysteine 2027–cysteine 2041, cysteine 2043–cysteine 2054, cysteine 2060–cysteine 2072, cysteine 2067–cysteine 2081, and cysteine 2083–cysteine 2096. One can recognise an EGF-like 30; calcium-binding domain in the interval 1850-1891 (DIDECSNGDNLCQRNADCINSPGSYRCECAAGFKLSPNGACV). Serine 1873 carries an O-linked (Glc) serine glycan. The 42-residue stretch at 1892–1933 (DRNECLEIPNVCSHGLCVDLQGSYQCICHNGFKASQDQTMCM) folds into the EGF-like 31; calcium-binding domain. Positions 1934 to 1972 (DVDECERHPCGNGTCKNTVGSYNCLCYPGFELTHNNDCL) constitute an EGF-like 32; calcium-binding domain. Asparagine 1945 is a glycosylation site (N-linked (GlcNAc...) asparagine). An O-linked (Glc) serine glycan is attached at serine 1954. The 43-residue stretch at 1973–2015 (DIDECSSFFGQVCRNGRCFNEIGSFKCLCNEGYELTPDGKNCI) folds into the EGF-like 33; calcium-binding domain. Serine 1996 is a glycosylation site (O-linked (Glc) serine). The region spanning 2016-2055 (DTNECVALPGSCSPGTCQNLEGSFRCICPPGYEVKSENCI) is the EGF-like 34; calcium-binding domain. The region spanning 2056–2097 (DINECDEDPNICLFGSCTNTPGGFQCLCPPGFVLSDNGRRCF) is the EGF-like 35; calcium-binding domain. The region spanning 2102–2155 (SFCFTNFENGKCSVPKAFNTTKAKCCCSKMPGEGWGDPCELCPKDDEVAFQDLC) is the TB 8 domain. Asparagine 2120 carries N-linked (GlcNAc...) asparagine glycosylation. In terms of domain architecture, EGF-like 36; calcium-binding spans 2171–2212 (DVNECLESPGICSNGQCINTDGSFRCECPMGYNLDYTGVRCV). 15 disulfide bridges follow: cysteine 2175–cysteine 2187, cysteine 2182–cysteine 2196, cysteine 2198–cysteine 2211, cysteine 2217–cysteine 2228, cysteine 2223–cysteine 2237, cysteine 2239–cysteine 2251, cysteine 2257–cysteine 2268, cysteine 2264–cysteine 2277, cysteine 2279–cysteine 2292, cysteine 2298–cysteine 2312, cysteine 2305–cysteine 2321, cysteine 2323–cysteine 2336, cysteine 2342–cysteine 2354, cysteine 2349–cysteine 2363, and cysteine 2365–cysteine 2378. Serine 2193 is a glycosylation site (O-linked (Glc) serine). The EGF-like 37; calcium-binding domain occupies 2213-2252 (DTDECSIGNPCGNGTCTNVIGSFECNCNEGFEPGPMMNCE). An N-linked (GlcNAc...) asparagine glycan is attached at asparagine 2225. In terms of domain architecture, EGF-like 38; calcium-binding spans 2253-2293 (DINECAQNPLLCAFRCMNTFGSYECTCPIGYALREDQKMCK). O-linked (Glc) serine glycosylation occurs at serine 2274. One can recognise an EGF-like 39; calcium-binding domain in the interval 2294 to 2337 (DLDECAEGLHDCESRGMMCKNLIGTFMCICPPGMARRPDGEGCV). One can recognise an EGF-like 40; calcium-binding domain in the interval 2338 to 2379 (DENECRTKPGICENGRCVNIIGSYRCECNEGFQSSSSGTECL). A glycan (O-linked (Glc) serine) is linked at serine 2360. Residues 2384–2437 (GLCFAEVLQTICQMASSSRNLVTKSECCCDGGRGWGHQCELCPLPGTAQYKKIC) enclose the TB 9 domain. Residues 2449-2490 (DIDECKVMPNLCTNGQCINTMGSFRCFCKVGYTTDISGTSCI) form the EGF-like 41; calcium-binding domain. Cystine bridges form between cysteine 2453–cysteine 2465, cysteine 2460–cysteine 2474, cysteine 2476–cysteine 2489, cysteine 2495–cysteine 2506, cysteine 2502–cysteine 2515, cysteine 2517–cysteine 2530, cysteine 2536–cysteine 2547, cysteine 2543–cysteine 2556, cysteine 2558–cysteine 2569, cysteine 2575–cysteine 2588, cysteine 2582–cysteine 2597, cysteine 2599–cysteine 2612, cysteine 2618–cysteine 2628, cysteine 2624–cysteine 2637, cysteine 2639–cysteine 2652, cysteine 2658–cysteine 2669, cysteine 2664–cysteine 2678, cysteine 2680–cysteine 2693, cysteine 2699–cysteine 2710, cysteine 2706–cysteine 2719, and cysteine 2721–cysteine 2733. Serine 2471 carries O-linked (Glc) serine glycosylation. Positions 2491–2531 (DLDECSQSPKPCNYICKNTEGSYQCSCPRGYVLQEDGKTCK) constitute an EGF-like 42; calcium-binding domain. O-linked (Glc) serine glycosylation occurs at serine 2512. Residues 2532–2570 (DLDECQTKQHNCQFLCVNTLGGFTCKCPPGFTQHHTACI) form the EGF-like 43; calcium-binding domain. The EGF-like 44; calcium-binding domain occupies 2571–2613 (DNNECGSQPSLCGAKGICQNTPGSFSCECQRGFSLDATGLNCE). The O-linked (Glc) serine glycan is linked to serine 2594. In terms of domain architecture, EGF-like 45; calcium-binding spans 2614-2653 (DVDECDGNHRCQHGCQNILGGYRCGCPQGYIQHYQWNQCV). One can recognise an EGF-like 46; calcium-binding domain in the interval 2654–2694 (DENECSNPNACGSASCYNTLGSYKCACPSGFSFDQFSSACH). O-linked (Glc) serine glycosylation is present at serine 2675. The 40-residue stretch at 2695–2734 (DVNECSSSKNPCNYGCSNTEGGYLCGCPPGYYRVGQGHCV) folds into the EGF-like 47; calcium-binding domain. N-linked (GlcNAc...) asparagine glycosylation occurs at asparagine 2808.

The protein belongs to the fibrillin family. As to quaternary structure, interacts with BMP2, BMP4, BMP7, BMP10 and GDF5. Interacts with MFAP2 and MFAP5. Interacts with ADAMTSL5. Interacts with MFAP4. In terms of processing, N-glycosylated. O-glycosylated on serine residues by POGLUT2 and POGLUT3. As to expression, almost exclusively expressed in placenta. Expressed at much lower level in other tissues. Expressed in fetal eye (18 weeks)in the retinal pigment epithelium (RPE), the choroid, Bruch's membrane and in the sclera. Not expressed in the neural retina. In terms of tissue distribution, present at high level in cytotrophoblasts as compared with syncytiotrophoblasts at 8-9 weeks of pregnancy (at protein level). Levels in the serum increase during pregnancy (at protein level).

It localises to the secreted. Its subcellular location is the extracellular space. The protein localises to the extracellular matrix. Its function is as follows. Fibrillins are structural components of 10-12 nm extracellular calcium-binding microfibrils, which occur either in association with elastin or in elastin-free bundles. Fibrillin-2-containing microfibrils regulate the early process of elastic fiber assembly. Regulates osteoblast maturation by controlling TGF-beta bioavailability and calibrating TGF-beta and BMP levels, respectively. Functionally, hormone secreted by trophoblasts that promotes trophoblast invasiveness. Has glucogenic activity: is able to increase plasma glucose levels. This is Fibrillin-2 from Homo sapiens (Human).